The primary structure comprises 286 residues: 4-hydroxybenzoate octaprenyltransferase (286 aa).

A run of 8 helical transmembrane segments spans residues 20–40 (IGTLLLLWPCLMALVLAAGGM), 43–63 (LKVLIIFIIGVVIMRACGCII), 96–116 (LFVILGLAAFGLVLLLNGLVV), 142–162 (FLGVVWSWSIPMAYAAQTGEV), 167–187 (WWLFAANWFWTVAYDTMYAMV), 210–230 (QIIGLFQIAALFCFVAAGWSA), 235–255 (VYGLGLLTFVGFSTYQQMLIF), and 266–286 (FLNNNWAGLVLFVSLGADYLF).

This sequence belongs to the UbiA prenyltransferase family. Requires Mg(2+) as cofactor.

The protein localises to the cell inner membrane. It catalyses the reaction all-trans-octaprenyl diphosphate + 4-hydroxybenzoate = 4-hydroxy-3-(all-trans-octaprenyl)benzoate + diphosphate. It functions in the pathway cofactor biosynthesis; ubiquinone biosynthesis. Its function is as follows. Catalyzes the prenylation of para-hydroxybenzoate (PHB) with an all-trans polyprenyl group. Mediates the second step in the final reaction sequence of ubiquinone-8 (UQ-8) biosynthesis, which is the condensation of the polyisoprenoid side chain with PHB, generating the first membrane-bound Q intermediate 3-octaprenyl-4-hydroxybenzoate. The chain is 4-hydroxybenzoate octaprenyltransferase from Shewanella oneidensis (strain ATCC 700550 / JCM 31522 / CIP 106686 / LMG 19005 / NCIMB 14063 / MR-1).